Here is a 455-residue protein sequence, read N- to C-terminus: UDP-glycosyltransferase 2 (455 aa).

This sequence belongs to the UDP-glycosyltransferase family.

The enzyme catalyses exophillate + UDP-alpha-D-galactose = phaeomoniecin D + UDP + H(+). It functions in the pathway secondary metabolite biosynthesis. In terms of biological role, catalyzes the second glycosylation step during phaeomoniecin D biosynthesis, the further O-galactosylation of exophillic acid (produced by the O-glycosyltransferase OGT1) to yield the 4-O-beta-D-galactoside phaeomoniecin D. This Phaeomoniella chlamydospora (Phaeoacremonium chlamydosporum) protein is UDP-glycosyltransferase 2.